Consider the following 446-residue polypeptide: Adenylosuccinate synthetase (446 aa).

Residues 20–26 and 48–50 each bind GTP; these read GDEGKGK and GHT. Residue D21 is the Proton acceptor of the active site. Residues D21 and G48 each contribute to the Mg(2+) site. IMP-binding positions include 21–24, 46–49, T137, R151, Q232, T247, and R319; these read DEGK and NAGH. The active-site Proton donor is H49. Residue 315-321 coordinates substrate; sequence SVTGRPR. GTP is bound by residues R321, 347–349, and 429–431; these read KLD and STG.

It belongs to the adenylosuccinate synthetase family. As to quaternary structure, homodimer. Mg(2+) is required as a cofactor.

The protein resides in the cytoplasm. The enzyme catalyses IMP + L-aspartate + GTP = N(6)-(1,2-dicarboxyethyl)-AMP + GDP + phosphate + 2 H(+). Its pathway is purine metabolism; AMP biosynthesis via de novo pathway; AMP from IMP: step 1/2. Its function is as follows. Plays an important role in the de novo pathway of purine nucleotide biosynthesis. Catalyzes the first committed step in the biosynthesis of AMP from IMP. The chain is Adenylosuccinate synthetase from Polynucleobacter asymbioticus (strain DSM 18221 / CIP 109841 / QLW-P1DMWA-1) (Polynucleobacter necessarius subsp. asymbioticus).